A 216-amino-acid polypeptide reads, in one-letter code: MKGYFVSFEGPDGAGKSTVLKEVLAEIAPQLKTQYLVTREPGGSKIAEKIRDIILDPANDKMDPKTEALLYAAARSQHVEEIIKPAINEGKVVFSDRFVDSSLAYQGQGRDLGIAKVKQINDFATDKLDPDLTFFLDIAPEIGLSRIKKLRPAQEDRLEQEDIAFHQKVYEGFLKVIKMYPDRFVVINATQPIDQVVKQVVTELKQRLPKTILENN.

10–17 (GPDGAGKS) serves as a coordination point for ATP.

This sequence belongs to the thymidylate kinase family.

The catalysed reaction is dTMP + ATP = dTDP + ADP. Its function is as follows. Phosphorylation of dTMP to form dTDP in both de novo and salvage pathways of dTTP synthesis. This chain is Thymidylate kinase, found in Lactobacillus acidophilus (strain ATCC 700396 / NCK56 / N2 / NCFM).